The primary structure comprises 166 residues: Protein SprT (166 aa).

Residues 19–164 enclose the SprT-like domain; the sequence is RDALARANLK…CVRCGDTLVA (146 aa). H78 serves as a coordination point for Zn(2+). Residue E79 is part of the active site. Residue H82 coordinates Zn(2+).

The protein belongs to the SprT family. The cofactor is Zn(2+).

The protein resides in the cytoplasm. The protein is Protein SprT of Cronobacter sakazakii (strain ATCC BAA-894) (Enterobacter sakazakii).